The primary structure comprises 94 residues: Long neurotoxin LNTX1 (94 aa).

An N-terminal signal peptide occupies residues 1–21; that stretch reads MKILLLTLVVVTIMCLDLGYT. 5 disulfides stabilise this stretch: Cys-24/Cys-43, Cys-36/Cys-64, Cys-49/Cys-53, Cys-68/Cys-79, and Cys-80/Cys-85.

It belongs to the three-finger toxin family. Long-chain subfamily. Type II alpha-neurotoxin sub-subfamily. Monomer. In terms of tissue distribution, expressed by the venom gland.

It localises to the secreted. Binds with high affinity to muscular (alpha-1/CHRNA1) and neuronal (alpha-7/CHRNA7) nicotinic acetylcholine receptor (nAChR) and inhibits acetylcholine from binding to the receptor, thereby impairing neuromuscular and neuronal transmission. Recombinant LNTX1 leads to a functional block of the muscle-type acetylcholine receptors. Has a cytotoxic activity. This Ophiophagus hannah (King cobra) protein is Long neurotoxin LNTX1.